We begin with the raw amino-acid sequence, 187 residues long: Peptidyl-tRNA hydrolase (187 aa).

Tyr-14 provides a ligand contact to tRNA. His-19 functions as the Proton acceptor in the catalytic mechanism. Residues Tyr-64 and Asn-66 each contribute to the tRNA site.

It belongs to the PTH family. As to quaternary structure, monomer.

The protein localises to the cytoplasm. It catalyses the reaction an N-acyl-L-alpha-aminoacyl-tRNA + H2O = an N-acyl-L-amino acid + a tRNA + H(+). Hydrolyzes ribosome-free peptidyl-tRNAs (with 1 or more amino acids incorporated), which drop off the ribosome during protein synthesis, or as a result of ribosome stalling. In terms of biological role, catalyzes the release of premature peptidyl moieties from peptidyl-tRNA molecules trapped in stalled 50S ribosomal subunits, and thus maintains levels of free tRNAs and 50S ribosomes. The chain is Peptidyl-tRNA hydrolase from Carboxydothermus hydrogenoformans (strain ATCC BAA-161 / DSM 6008 / Z-2901).